A 243-amino-acid chain; its full sequence is Cell division protein ZipA (243 aa).

Topologically, residues 1–4 are periplasmic; the sequence is MSDV. The chain crosses the membrane as a helical span at residues 5–25; it reads TLLRIGIAIVGILFVAAVFFF. Over 26-243 the chain is Cytoplasmic; the sequence is STPKTSAHRV…VPPLIKNSRW (218 aa). Residues 32-89 are disordered; it reads AHRVRTKKEEPPRERREPMLSTEVDNSPHQSVDEVPASVPQQQVNPEATKPGEIELGK. Residues 38–49 show a composition bias toward basic and acidic residues; the sequence is KKEEPPRERREP.

Belongs to the ZipA family. Interacts with FtsZ via their C-terminal domains.

Its subcellular location is the cell inner membrane. Essential cell division protein that stabilizes the FtsZ protofilaments by cross-linking them and that serves as a cytoplasmic membrane anchor for the Z ring. Also required for the recruitment to the septal ring of downstream cell division proteins. In Xylella fastidiosa (strain Temecula1 / ATCC 700964), this protein is Cell division protein ZipA.